Consider the following 238-residue polypeptide: Valine-rich protein (238 aa).

A signal peptide spans 1–16; sequence MQAVLLVVALFGAALA.

As to expression, prismatic layer of shell (at protein level). Expressed primarily in the mantle with highest level in the mantle edge and lower level in the mantle pallium.

It localises to the secreted. The protein is Valine-rich protein of Pinctada maxima (Silver-lipped pearl oyster).